A 313-amino-acid chain; its full sequence is NAD-capped RNA hydrolase NudC (313 aa).

R111 is a binding site for substrate. The region spanning 168–293 (PRIDPAVICL…DWSSASESKL (126 aa)) is the Nudix hydrolase domain. A divalent metal cation-binding residues include A202, E218, and E222. Residues 203–224 (GFVEAGESFEVCVAREIREEIG) carry the Nudix box motif. 236–243 (QQWPFPRS) lines the substrate pocket. Residue E264 participates in a divalent metal cation binding.

The protein belongs to the Nudix hydrolase family. NudC subfamily. In terms of assembly, homodimer. Requires Mg(2+) as cofactor. The cofactor is Mn(2+).

It catalyses the reaction a 5'-end NAD(+)-phospho-ribonucleoside in mRNA + H2O = a 5'-end phospho-adenosine-phospho-ribonucleoside in mRNA + beta-nicotinamide D-ribonucleotide + 2 H(+). It carries out the reaction NAD(+) + H2O = beta-nicotinamide D-ribonucleotide + AMP + 2 H(+). The catalysed reaction is NADH + H2O = reduced beta-nicotinamide D-ribonucleotide + AMP + 2 H(+). Functionally, mRNA decapping enzyme that specifically removes the nicotinamide adenine dinucleotide (NAD) cap from a subset of mRNAs by hydrolyzing the diphosphate linkage to produce nicotinamide mononucleotide (NMN) and 5' monophosphate mRNA. The NAD-cap is present at the 5'-end of some mRNAs and stabilizes RNA against 5'-processing. Has preference for mRNAs with a 5'-end purine. Catalyzes the hydrolysis of a broad range of dinucleotide pyrophosphates. This Mycobacterium tuberculosis (strain ATCC 25177 / H37Ra) protein is NAD-capped RNA hydrolase NudC.